Consider the following 126-residue polypeptide: Methylglyoxal synthase (126 aa).

The MGS-like domain maps to 1–126; the sequence is MAERQKIALI…ADRLLPVITE (126 aa). Substrate-binding positions include H12, K16, 38-41, and 59-60; these read TGTT and SG. D65 functions as the Proton donor/acceptor in the catalytic mechanism. Position 92 (H92) interacts with substrate.

Belongs to the methylglyoxal synthase family.

The enzyme catalyses dihydroxyacetone phosphate = methylglyoxal + phosphate. Catalyzes the formation of methylglyoxal from dihydroxyacetone phosphate. This Allorhizobium ampelinum (strain ATCC BAA-846 / DSM 112012 / S4) (Agrobacterium vitis (strain S4)) protein is Methylglyoxal synthase.